Reading from the N-terminus, the 233-residue chain is MAKNTSGRGQRDLKVKVKTARGRKLSSTRWLQRQLNDPYVKRAQAEGYRGRAAFKILELDEKYRFLVPGARVVDLGCAPGGWCQVAVKRVNALGERSDKRVGRVLGIDLQEVEPIAGAEIHQLDFLDDGADDRIKEWLGGKADVVMSDMAASSSGHKQTDHMRIIALCEAAAYLAFDVLEEGGTFVAKVLAGGAEGDLQKLLKQKFTKVANVKPPASRSDSSEKFVVATGFRG.

G80, W82, D108, D124, and D148 together coordinate S-adenosyl-L-methionine. Catalysis depends on K188, which acts as the Proton acceptor.

Belongs to the class I-like SAM-binding methyltransferase superfamily. RNA methyltransferase RlmE family.

It is found in the cytoplasm. It catalyses the reaction uridine(2552) in 23S rRNA + S-adenosyl-L-methionine = 2'-O-methyluridine(2552) in 23S rRNA + S-adenosyl-L-homocysteine + H(+). Its function is as follows. Specifically methylates the uridine in position 2552 of 23S rRNA at the 2'-O position of the ribose in the fully assembled 50S ribosomal subunit. This chain is Ribosomal RNA large subunit methyltransferase E, found in Ruegeria pomeroyi (strain ATCC 700808 / DSM 15171 / DSS-3) (Silicibacter pomeroyi).